Reading from the N-terminus, the 99-residue chain is UPF0045 protein MTH_1187 (99 aa).

The protein belongs to the UPF0045 family. Homotetramer.

In Methanothermobacter thermautotrophicus (strain ATCC 29096 / DSM 1053 / JCM 10044 / NBRC 100330 / Delta H) (Methanobacterium thermoautotrophicum), this protein is UPF0045 protein MTH_1187.